An 808-amino-acid polypeptide reads, in one-letter code: MVPNKHLLLIILSFSTACGQTTPTTAVEKNKTQAIYQEYFKYRVCSASTTGELFRFDLDRTCPSTEDKVHKEGILLVYKKNIVPYIFKVRRYKKITTSVRIFNGWTREGVAITNKWELSRAVPKYEIDIMDKTYQCHNCMQIEVNGMLNSYYDRDGNNKTVDLKPVDGLTGAITRYISQPKVFADPGWLWGTYRTRTTVNCEIVDMFARSADPYTYFVTALGDTVEVSPFCDVDNSCPNATDVLSVQIDLNHTVVDYGNRATSQQHKKRIFAHTLDYSVSWEAVNKSASVCSMVFWKSFQRAIQTEHDLTYHFIANEITAGFSTVKEPLANFTSDYNCLMTHINTTLEDKIARVNNTHTPNGTAEYYQTEGGMILVWQPLIAIELEEAMLEATTSPVTPSAPTSSSRSKRAIRSIRDVSAGSENNVFLSQIQYAYDKLRQSINNVLEELAITWCREQVRQTMVWYEIAKINPTSVMTAIYGKPVSRKALGDVISVTECINVDQSSVSIHKSLKTENNDICYSRPPVTFKFVNSSQLFKGQLGARNEILLSESLVENCHQNAETFFTAKNETYHFKNYVHVETLPVNNISTLDTFLALNLTFIENIDFKAVELYSSGERKLANVFDLETMFREYNYYAQSISGLRKDFDNSQRNNRDRIIQDFSEILADLGSIGKVIVNVASGAFSLFGGIVTGILNFIKNPLGGMFTFLLIGAVIILVILLVRRTNNMSQAPIRMIYPDVEKSKSTVTPMEPETIKQILLGMHNMQQEAYKKKEEQRAARPSIFRQAAETFLRKRSGYKQISTEDKIV.

An N-terminal signal peptide occupies residues 1-19; it reads MVPNKHLLLIILSFSTACG. Topologically, residues 20 to 701 are virion surface; the sequence is QTTPTTAVEK…TGILNFIKNP (682 aa). An N-linked (GlcNAc...) asparagine; by host glycan is attached at N30. Disulfide bonds link C45–C498, C62–C454, C136–C201, C291–C338, and C520–C557. An involved in fusion and/or binding to host membrane region spans residues 101 to 107; the sequence is IFNGWTR. A glycan (N-linked (GlcNAc...) asparagine; by host) is linked at N158. The involved in fusion and/or binding to host membrane stretch occupies residues 187–195; the sequence is GWLWGTYRT. 11 N-linked (GlcNAc...) asparagine; by host glycosylation sites follow: N239, N251, N285, N331, N344, N355, N361, N532, N569, N587, and N598. 2 hydrophobic membrane proximal region regions span residues 647–699 and 658–698; these read FDNS…NFIK and IIQD…LNFI. The helical transmembrane segment at 702-722 threads the bilayer; sequence LGGMFTFLLIGAVIILVILLV. The Intravirion segment spans residues 723-808; sequence RRTNNMSQAP…KQISTEDKIV (86 aa).

It belongs to the herpesviridae glycoprotein B family. Homotrimer; disulfide-linked. Binds to heparan sulfate proteoglycans. Interacts with gH/gL heterodimer. A proteolytic cleavage by host furin generates two subunits that remain linked by disulfide bonds.

It localises to the virion membrane. It is found in the host cell membrane. The protein localises to the host endosome membrane. The protein resides in the host Golgi apparatus membrane. In terms of biological role, envelope glycoprotein that forms spikes at the surface of virion envelope. Essential for the initial attachment to heparan sulfate moieties of the host cell surface proteoglycans. Involved in fusion of viral and cellular membranes leading to virus entry into the host cell. Following initial binding to its host receptors, membrane fusion is mediated by the fusion machinery composed at least of gB and the heterodimer gH/gL. May be involved in the fusion between the virion envelope and the outer nuclear membrane during virion egress. This is Envelope glycoprotein B from Saimiriine herpesvirus 2 (strain 11) (SaHV-2).